A 148-amino-acid chain; its full sequence is Calmodulin-4 (148 aa).

EF-hand domains are found at residues 8-43 (EEVA…LGKN), 44-79 (LPEK…YKKG), 80-115 (HRAG…LGES), and 116-148 (LSQE…HVEN). Ca(2+) contacts are provided by Asp-21, Asn-23, Asp-25, His-27, Glu-32, Asp-57, Asp-59, Asp-61, Lys-63, Glu-68, Asp-93, Asn-95, Asp-97, Tyr-99, and Glu-104.

Functionally, implicated in the early stage of ectopic ossification. The sequence is that of Calmodulin-4 (Calm4) from Mus musculus (Mouse).